A 21-amino-acid chain; its full sequence is Snake venom serine protease jerdonase (21 aa).

A Peptidase S1 domain is found at 1–21 (IIGGDECNINEHPFLVALYDA).

This sequence belongs to the peptidase S1 family. Snake venom subfamily. In terms of assembly, monomer. In terms of processing, glycosylated; contains 35.8% neutral carbohydrate. Expressed by the venom gland.

It localises to the secreted. Its activity is regulated as follows. Inhibited by PMSF and soybean trypsin inhibitor. Partially inhibited by L-cysteine and DTT. Not affected by EDTA. In terms of biological role, multifunctional venom serine protease that has fibrino(geno)lytic activity towards the A alpha-chain of human fibrinogen (FGA) and a slow activity towards the B beta-chain (FGB). Also hydrolyzes bovine low-molecular-mass kininogen and releases bradykinin. Catalyzes the hydrolysis of BAEE, S-2238 and S-2302. The sequence is that of Snake venom serine protease jerdonase from Protobothrops jerdonii (Jerdon's pitviper).